Consider the following 380-residue polypeptide: uncharacterized protein (380 aa).

This is an uncharacterized protein from Sinorhizobium fredii (strain NBRC 101917 / NGR234).